Reading from the N-terminus, the 3329-residue chain is Breast cancer type 2 susceptibility protein homolog (3329 aa).

An interaction with PALB2 region spans residues methionine 1–proline 40. 2 disordered regions span residues serine 37–proline 69 and glutamate 207–serine 241. A phosphoserine mark is found at serine 435 and serine 481. Residues proline 628–phenylalanine 650 are disordered. The segment at proline 628–valine 979 is interaction with NPM1. Serine 735 bears the Phosphoserine mark. A compositionally biased stretch (basic and acidic residues) spans glutamate 934 to lysine 953. Residues glutamate 934–asparagine 965 form a disordered region. Positions serine 954 to asparagine 965 are enriched in polar residues. 2 BRCA2 repeats span residues asparagine 981–glutamate 1015 and asparagine 1192–asparagine 1226. The interval histidine 982–glutamate 2035 is interaction with RAD51. Residues asparagine 1296–serine 1340 are disordered. The span at tyrosine 1303–glycine 1323 shows a compositional bias: polar residues. BRCA2 repeat units follow at residues isoleucine 1394–aspartate 1428, lysine 1491–tyrosine 1525, threonine 1623–aspartate 1657, proline 1924–glycine 1958, and asparagine 2004–leucine 2038. Residue serine 2048 is modified to Phosphoserine. Positions asparagine 2073–threonine 2099 are disordered. The segment covering serine 2074–threonine 2099 has biased composition (polar residues). The segment at lysine 2219–serine 2285 is interaction with HSF2BP. Residues threonine 2298–valine 2466 are interaction with FANCD2. The interval phenylalanine 2361–histidine 2393 is disordered. Over residues lysine 2377–histidine 2393 the composition is skewed to basic and acidic residues. An interaction with SEM1 region spans residues methionine 2402 to glutamate 2753. The Nuclear export signal; masked by interaction with SEM1 motif lies at alanine 2603–threonine 2619. Serine 3214 bears the Phosphoserine; by CDK1 and CDK2 mark. 2 disordered regions span residues phenylalanine 3221 to proline 3257 and glutamine 3273 to serine 3329. Serine 3241 bears the Phosphoserine mark. Over residues serine 3309–serine 3329 the composition is skewed to basic and acidic residues.

Monomer and dimer. Interacts with RAD51; regulates RAD51 recruitment and function at sites of DNA repair. Interacts with SEM1, WDR16, USP11, DMC1, ROCK2 and NPM1. Interacts with both nonubiquitinated and monoubiquitinated FANCD2; this complex also includes XRCC3 and phosphorylated FANCG. Part of a BRCA complex containing BRCA1, BRCA2 and PALB2. Component of the homologous recombination repair (HR) complex composed of ERCC5/XPG, BRCA2, PALB2, DSS1 and RAD51. Within the complex, interacts with ERCC5/XPG and PALB2. Interacts directly with PALB2 which may serve as a scaffold for a HR complex containing PALB2, BRCA2, RAD51C, RAD51 and XRCC3. Interacts with BRCA1 only in the presence of PALB2 which serves as the bridging protein. Interacts with POLH; the interaction is direct. Interacts with the TREX-2 complex subunits PCID2 and SEM1. Interacts with HSF2BP and BRME1; the interaction with HSF2BP is direct and allows the formation of a ternary complex. The complex BRME1:HSF2BP:BRCA2 interacts with SPATA22, MEIOB and RAD51. In terms of processing, phosphorylated by ATM upon irradiation-induced DNA damage. Phosphorylation by CHEK1 and CHEK2 regulates interaction with RAD51. Phosphorylation at Ser-3291 by CDK1 and CDK2 is low in S phase when recombination is active, but increases as cells progress towards mitosis; this phosphorylation prevents homologous recombination-dependent repair during S phase and G2 by inhibiting RAD51 binding. Post-translationally, ubiquitinated in the absence of DNA damage; this does not lead to proteasomal degradation. In contrast, ubiquitination in response to DNA damage leads to proteasomal degradation. Widely expressed. Highest expression in cerebellum, testis, ileum, appendix, epididymis, ovary and mammary gland. No expression in lung.

Its subcellular location is the nucleus. The protein localises to the cytoplasm. The protein resides in the cytoskeleton. It localises to the microtubule organizing center. It is found in the centrosome. In terms of biological role, involved in double-strand break repair and/or homologous recombination. Binds RAD51 and potentiates recombinational DNA repair by promoting assembly of RAD51 onto single-stranded DNA (ssDNA). Acts by targeting RAD51 to ssDNA over double-stranded DNA, enabling RAD51 to displace replication protein-A (RPA) from ssDNA and stabilizing RAD51-ssDNA filaments by blocking ATP hydrolysis. Part of a PALB2-scaffolded HR complex containing RAD51C and which is thought to play a role in DNA repair by HR. May participate in S phase checkpoint activation. Binds selectively to ssDNA, and to ssDNA in tailed duplexes and replication fork structures. May play a role in the extension step after strand invasion at replication-dependent DNA double-strand breaks; together with PALB2 is involved in both POLH localization at collapsed replication forks and DNA polymerization activity. In concert with NPM1, regulates centrosome duplication. Interacts with the TREX-2 complex (transcription and export complex 2) subunits PCID2 and SEM1, and is required to prevent R-loop-associated DNA damage and thus transcription-associated genomic instability, independently of its known role in homologous recombination. The sequence is that of Breast cancer type 2 susceptibility protein homolog from Mus musculus (Mouse).